A 103-amino-acid polypeptide reads, in one-letter code: UPF0145 protein PTH_2690 (103 aa).

The protein belongs to the UPF0145 family.

The sequence is that of UPF0145 protein PTH_2690 from Pelotomaculum thermopropionicum (strain DSM 13744 / JCM 10971 / SI).